We begin with the raw amino-acid sequence, 431 residues long: Adenylosuccinate synthetase (431 aa).

GTP-binding positions include 12–18 (GDEGKGK) and 40–42 (GHT). Residue Asp13 is the Proton acceptor of the active site. Residues Asp13 and Gly40 each contribute to the Mg(2+) site. IMP is bound by residues 13–16 (DEGK), 38–41 (NAGH), Thr129, Arg143, Gln224, Thr239, and Arg303. Catalysis depends on His41, which acts as the Proton donor. Residue 299-305 (TVSNRQR) participates in substrate binding. GTP is bound by residues Arg305, 331 to 333 (KLD), and 413 to 415 (STG).

This sequence belongs to the adenylosuccinate synthetase family. As to quaternary structure, homodimer. Mg(2+) is required as a cofactor.

The protein localises to the cytoplasm. The catalysed reaction is IMP + L-aspartate + GTP = N(6)-(1,2-dicarboxyethyl)-AMP + GDP + phosphate + 2 H(+). The protein operates within purine metabolism; AMP biosynthesis via de novo pathway; AMP from IMP: step 1/2. In terms of biological role, plays an important role in the de novo pathway of purine nucleotide biosynthesis. Catalyzes the first committed step in the biosynthesis of AMP from IMP. In Ehrlichia canis (strain Jake), this protein is Adenylosuccinate synthetase.